A 352-amino-acid polypeptide reads, in one-letter code: Dihydrorhizobitoxine desaturase (352 aa).

The next 3 helical transmembrane spans lie at 53-73 (LATL…IGAY), 89-109 (LAKN…YPLF), and 204-224 (IGIL…LFWI).

This sequence belongs to the fatty acid desaturase type 1 family.

It is found in the cell inner membrane. The enzyme catalyses dihydrorhizobitoxine + 2 reduced [2Fe-2S]-[ferredoxin] + O2 + 2 H(+) = rhizobitoxine + 2 oxidized [2Fe-2S]-[ferredoxin] + 2 H2O. Its function is as follows. Involved in the biosynthesis of the nodulation enhancer compound rhizobitoxine. Catalyzes the final step of the pathway, the introduction of a carbon double bond into the C3 position of dihydrorhizobitoxine to produce rhizobitoxine. In Bradyrhizobium elkanii, this protein is Dihydrorhizobitoxine desaturase.